Consider the following 332-residue polypeptide: Glycerol-3-phosphate dehydrogenase [NAD(P)+] (332 aa).

Positions 11, 30, and 108 each coordinate NADPH. Residues lysine 108, glycine 137, and serine 139 each coordinate sn-glycerol 3-phosphate. Alanine 141 contributes to the NADPH binding site. The sn-glycerol 3-phosphate site is built by lysine 192, aspartate 245, serine 255, arginine 256, and asparagine 257. Lysine 192 (proton acceptor) is an active-site residue. Residue arginine 256 coordinates NADPH. NADPH contacts are provided by valine 280 and glutamate 282.

This sequence belongs to the NAD-dependent glycerol-3-phosphate dehydrogenase family.

It is found in the cytoplasm. It catalyses the reaction sn-glycerol 3-phosphate + NAD(+) = dihydroxyacetone phosphate + NADH + H(+). The enzyme catalyses sn-glycerol 3-phosphate + NADP(+) = dihydroxyacetone phosphate + NADPH + H(+). It participates in membrane lipid metabolism; glycerophospholipid metabolism. Its function is as follows. Catalyzes the reduction of the glycolytic intermediate dihydroxyacetone phosphate (DHAP) to sn-glycerol 3-phosphate (G3P), the key precursor for phospholipid synthesis. In Burkholderia cenocepacia (strain ATCC BAA-245 / DSM 16553 / LMG 16656 / NCTC 13227 / J2315 / CF5610) (Burkholderia cepacia (strain J2315)), this protein is Glycerol-3-phosphate dehydrogenase [NAD(P)+].